The chain runs to 423 residues: F-box/LRR-repeat protein 2 (423 aa).

Residues 9–55 (GRINKKLPKELLLRIFSFLDIVTLCRCAQISKAWNILALDGSNWQRI) form the F-box domain. LRR repeat units follow at residues 61 to 87 (QTDV…SLRG), 88 to 113 (CIGV…NLNG), 114 to 139 (CTKI…DLTS), 140 to 165 (CVSI…NLSW), 166 to 191 (CDQI…LLRG), 192 to 217 (CTQL…NLQS), 218 to 243 (CSRI…CLSG), 244 to 269 (CSNL…EAAR), 270 to 295 (CSHL…DLEE), 296 to 321 (CILI…SLSH), 322 to 350 (CELI…ELDN), 351 to 375 (CLLI…ELYD), and 376 to 401 (CQQV…AYFA). Positions 80-90 (LRKLSLRGCIG) are interaction with Calmodulin. K201 participates in a covalent cross-link: Glycyl lysine isopeptide (Lys-Gly) (interchain with G-Cter in ubiquitin). T404 carries the phosphothreonine modification. C420 carries S-geranylgeranyl cysteine lipidation. Positions 420-423 (CVIL) match the CAAX motif motif.

In terms of assembly, part of the SCF (SKP1-CUL1-F-box) E3 ubiquitin-protein ligase complex SCF(FBXL2) composed of CUL1, SKP1, RBX1 and FBXL2. Interacts with calmodulin; may antagonize substrate ubiquitination by SCF(FBXL2). May interact with PIK3R1. Interacts with PTPN13. In terms of processing, phosphorylated by GSK-beta (GSK3B), promoting recognition by FBXO3, leading to its ubiquitination by the SCF(FBXO3) complex. Post-translationally, ubiquitinated at Lys-201 by the SCF(FBXO3) complex in response to lipopolysaccharide (LPS), leading to its degradation by the proteasome.

It localises to the membrane. Its pathway is protein modification; protein ubiquitination. Calcium-activated substrate recognition component of the SCF (SKP1-cullin-F-box protein) E3 ubiquitin-protein ligase complex, SCF(FBXL2), which mediates the ubiquitination and subsequent proteasomal degradation of target proteins. Unlike many F-box proteins, FBXL2 does not seem to target phosphodegron within its substrates but rather calmodulin-binding motifs and is thereby antagonized by calmodulin. This is the case for the cyclins CCND2 and CCND3 which polyubiquitination and subsequent degradation are inhibited by calmodulin. Through CCND2 and CCND3 degradation induces cell-cycle arrest in G(0). SCF(FBXL2) also mediates PIK3R2 ubiquitination and proteasomal degradation thereby regulating phosphatidylinositol 3-kinase signaling and autophagy. PCYT1A monoubiquitination by SCF(FBXL2) and subsequent degradation regulates synthesis of phosphatidylcholine, which is utilized for formation of membranes and of pulmonary surfactant. The SCF(FBXL2) complex acts as a regulator of inflammation by mediating ubiquitination and degradation of TRAF proteins (TRAF1, TRAF2, TRAF3, TRAF4, TRAF5 and TRAF6). The SCF(FBXL2) complex acts as a negative regulator of the NLRP3 inflammasome by mediating ubiquitination and degradation of NLRP3. In Pongo abelii (Sumatran orangutan), this protein is F-box/LRR-repeat protein 2.